The chain runs to 241 residues: Orotidine 5'-phosphate decarboxylase (241 aa).

Substrate-binding positions include aspartate 15, lysine 37, 64 to 73 (DLKYHDIPNT), threonine 126, arginine 187, glutamine 196, glycine 216, and arginine 217. Lysine 66 (proton donor) is an active-site residue.

It belongs to the OMP decarboxylase family. Type 1 subfamily. As to quaternary structure, homodimer.

The enzyme catalyses orotidine 5'-phosphate + H(+) = UMP + CO2. It participates in pyrimidine metabolism; UMP biosynthesis via de novo pathway; UMP from orotate: step 2/2. Catalyzes the decarboxylation of orotidine 5'-monophosphate (OMP) to uridine 5'-monophosphate (UMP). This chain is Orotidine 5'-phosphate decarboxylase, found in Trichlorobacter lovleyi (strain ATCC BAA-1151 / DSM 17278 / SZ) (Geobacter lovleyi).